We begin with the raw amino-acid sequence, 264 residues long: Acyl-[acyl-carrier-protein]--UDP-N-acetylglucosamine O-acyltransferase (264 aa).

Belongs to the transferase hexapeptide repeat family. LpxA subfamily. Homotrimer.

Its subcellular location is the cytoplasm. It catalyses the reaction a (3R)-hydroxyacyl-[ACP] + UDP-N-acetyl-alpha-D-glucosamine = a UDP-3-O-[(3R)-3-hydroxyacyl]-N-acetyl-alpha-D-glucosamine + holo-[ACP]. Its pathway is glycolipid biosynthesis; lipid IV(A) biosynthesis; lipid IV(A) from (3R)-3-hydroxytetradecanoyl-[acyl-carrier-protein] and UDP-N-acetyl-alpha-D-glucosamine: step 1/6. Involved in the biosynthesis of lipid A, a phosphorylated glycolipid that anchors the lipopolysaccharide to the outer membrane of the cell. This is Acyl-[acyl-carrier-protein]--UDP-N-acetylglucosamine O-acyltransferase from Rickettsia prowazekii (strain Madrid E).